We begin with the raw amino-acid sequence, 420 residues long: Tol-Pal system protein TolB (420 aa).

An N-terminal signal peptide occupies residues 1–21 (MKLFVHLVLFISLFIPYFTKA).

The protein belongs to the TolB family. In terms of assembly, the Tol-Pal system is composed of five core proteins: the inner membrane proteins TolA, TolQ and TolR, the periplasmic protein TolB and the outer membrane protein Pal. They form a network linking the inner and outer membranes and the peptidoglycan layer.

The protein localises to the periplasm. Its function is as follows. Part of the Tol-Pal system, which plays a role in outer membrane invagination during cell division and is important for maintaining outer membrane integrity. In Wolbachia pipientis wMel, this protein is Tol-Pal system protein TolB.